A 64-amino-acid polypeptide reads, in one-letter code: Large ribosomal subunit protein bL35c (64 aa).

The protein belongs to the bacterial ribosomal protein bL35 family.

The protein localises to the plastid. Its subcellular location is the chloroplast. The polypeptide is Large ribosomal subunit protein bL35c (Cyanidium caldarium (Red alga)).